The primary structure comprises 317 residues: Probable cell division protein WhiA (317 aa).

Positions 275–308 form a DNA-binding region, H-T-H motif; that stretch reads SLKELGEMLVPKVGKSGVNHRMRKIDELAEKLEE.

Belongs to the WhiA family.

Functionally, involved in cell division and chromosome segregation. This Desulfitobacterium hafniense (strain DSM 10664 / DCB-2) protein is Probable cell division protein WhiA.